Reading from the N-terminus, the 125-residue chain is Snaclec VP12 subunit B (125 aa).

Disulfide bonds link cysteine 4–cysteine 15, cysteine 32–cysteine 121, and cysteine 98–cysteine 113. The C-type lectin domain maps to 11-122 (FEKYCYKVFQ…CNDPRYFVCK (112 aa)).

It belongs to the snaclec family. Heterodimer of subunits alpha and beta; disulfide-linked. Expressed by the venom gland.

The protein resides in the secreted. Functionally, inhibits integrin alpha-2/beta-1- (ITGA2/ITGB1) dependent melanoma metastasis. This is Snaclec VP12 subunit B from Daboia palaestinae (Palestine viper).